The sequence spans 295 residues: Protoheme IX farnesyltransferase (295 aa).

The next 9 membrane-spanning stretches (helical) occupy residues 31–51 (GLVM…IGAA), 54–74 (VLTV…NCYL), 98–118 (FVAL…LSLA), 121–141 (GLTA…YTPM), 147–167 (TALF…WTSV), 173–193 (AGGL…FLAI), 220–240 (LWMA…VPLG), 245–265 (GYAI…ISGI), and 273–293 (ARTF…ALFL).

Belongs to the UbiA prenyltransferase family. Protoheme IX farnesyltransferase subfamily.

It localises to the cell inner membrane. The catalysed reaction is heme b + (2E,6E)-farnesyl diphosphate + H2O = Fe(II)-heme o + diphosphate. It participates in porphyrin-containing compound metabolism; heme O biosynthesis; heme O from protoheme: step 1/1. Converts heme B (protoheme IX) to heme O by substitution of the vinyl group on carbon 2 of heme B porphyrin ring with a hydroxyethyl farnesyl side group. The protein is Protoheme IX farnesyltransferase of Anaeromyxobacter dehalogenans (strain 2CP-C).